A 259-amino-acid chain; its full sequence is Protein GrpE (259 aa).

2 disordered regions span residues 1–74 (MNSD…IKGS) and 228–259 (PGPKVINEEIPDQSASNQELSESVDGSTKDEN). A compositionally biased stretch (low complexity) spans 17–40 (SSQNNPSENSVSSPNSNESVNQVE). 2 stretches are compositionally biased toward polar residues: residues 56 to 73 (VDTANEQSSTSCESNIKG) and 240 to 253 (QSASNQELSESVDG).

This sequence belongs to the GrpE family. In terms of assembly, homodimer.

The protein resides in the cytoplasm. Participates actively in the response to hyperosmotic and heat shock by preventing the aggregation of stress-denatured proteins, in association with DnaK and GrpE. It is the nucleotide exchange factor for DnaK and may function as a thermosensor. Unfolded proteins bind initially to DnaJ; upon interaction with the DnaJ-bound protein, DnaK hydrolyzes its bound ATP, resulting in the formation of a stable complex. GrpE releases ADP from DnaK; ATP binding to DnaK triggers the release of the substrate protein, thus completing the reaction cycle. Several rounds of ATP-dependent interactions between DnaJ, DnaK and GrpE are required for fully efficient folding. The protein is Protein GrpE of Prochlorococcus marinus (strain NATL2A).